A 273-amino-acid chain; its full sequence is MAIHLYKTSTSSTRNGAVDSQVKSNPRNNLIYGQHRCGKGRNARGIITAGHRGGGHKRLYRKIDFRRNEKEISGRIVTIEYDPNRNAYICLIHYGDGEKRYILHPRGAIIGDTIVSGTEVPISMGNALPLTDMPLGTAIHNIEITLGKGGQLARAAGAVAKLIAKEGKSATLRLPSGEVRLISKNCLATVGQVGNVGVNQKSLGRAGSKCWLGKRPVVRGVVMNPVDHPHGGGEGRAPIGRKKPTTPWGYPALGRRSRKRNKYSDSLILRRRK.

Disordered stretches follow at residues M1–N25 and N224–K273.

Belongs to the universal ribosomal protein uL2 family. As to quaternary structure, part of the 50S ribosomal subunit.

Its subcellular location is the plastid. It localises to the chloroplast. This Phalaenopsis aphrodite subsp. formosana (Moth orchid) protein is Large ribosomal subunit protein uL2cz/uL2cy (rpl2-A).